Here is a 48-residue protein sequence, read N- to C-terminus: ATP synthase protein 8 (48 aa).

The helical transmembrane segment at 13-32 (LVYGFALVTILLVLFAQYFL) threads the bilayer.

Belongs to the ATPase protein 8 family. F-type ATPases have 2 components, CF(1) - the catalytic core - and CF(0) - the membrane proton channel.

Its subcellular location is the mitochondrion membrane. Mitochondrial membrane ATP synthase (F(1)F(0) ATP synthase or Complex V) produces ATP from ADP in the presence of a proton gradient across the membrane which is generated by electron transport complexes of the respiratory chain. F-type ATPases consist of two structural domains, F(1) - containing the extramembraneous catalytic core and F(0) - containing the membrane proton channel, linked together by a central stalk and a peripheral stalk. During catalysis, ATP synthesis in the catalytic domain of F(1) is coupled via a rotary mechanism of the central stalk subunits to proton translocation. Part of the complex F(0) domain. Minor subunit located with subunit a in the membrane. The polypeptide is ATP synthase protein 8 (ATP8) (Kluyveromyces lactis (strain ATCC 8585 / CBS 2359 / DSM 70799 / NBRC 1267 / NRRL Y-1140 / WM37) (Yeast)).